Reading from the N-terminus, the 346-residue chain is D-erythrose-4-phosphate dehydrogenase (346 aa).

Residue 11–12 (RI) coordinates NAD(+). Residues 163–165 (SCT), Arg209, 222–223 (TK), and Arg245 contribute to the substrate site. The active-site Nucleophile is the Cys164. Asn327 contacts NAD(+).

This sequence belongs to the glyceraldehyde-3-phosphate dehydrogenase family. Epd subfamily. As to quaternary structure, homotetramer.

The protein localises to the cytoplasm. The catalysed reaction is D-erythrose 4-phosphate + NAD(+) + H2O = 4-phospho-D-erythronate + NADH + 2 H(+). Its pathway is cofactor biosynthesis; pyridoxine 5'-phosphate biosynthesis; pyridoxine 5'-phosphate from D-erythrose 4-phosphate: step 1/5. Functionally, catalyzes the NAD-dependent conversion of D-erythrose 4-phosphate to 4-phosphoerythronate. This Vibrio vulnificus (strain CMCP6) protein is D-erythrose-4-phosphate dehydrogenase.